The primary structure comprises 620 residues: Chaperone protein HscA homolog (620 aa).

This sequence belongs to the heat shock protein 70 family.

In terms of biological role, chaperone involved in the maturation of iron-sulfur cluster-containing proteins. Has a low intrinsic ATPase activity which is markedly stimulated by HscB. The sequence is that of Chaperone protein HscA homolog from Shewanella baltica (strain OS195).